The sequence spans 243 residues: uncharacterized protein (243 aa).

An N-terminal signal peptide occupies residues 1–19; that stretch reads MDELALSFSLTCLLPENRA. Asparagine 136 carries N-linked (GlcNAc...) asparagine glycosylation.

The protein resides in the secreted. This is an uncharacterized protein from Homo sapiens (Human).